Reading from the N-terminus, the 83-residue chain is Putative snRNP Sm-like protein (83 aa).

The region spanning 9-81 (KPMDVLKNAL…VIFVSPSKGD (73 aa)) is the Sm domain.

It belongs to the snRNP Sm proteins family.

The polypeptide is Putative snRNP Sm-like protein (Thermoplasma volcanium (strain ATCC 51530 / DSM 4299 / JCM 9571 / NBRC 15438 / GSS1)).